We begin with the raw amino-acid sequence, 732 residues long: MEESSPKSLLDITLLYLSTHLEKFCWERQDGTYCLQDAAIFPQEVADRLLQAMAVQRQLNEVTVGIFRGNQLRLKRACIRKAKISAVAFRKAFCHHKLIELDATGVNADITITDIISGLSSSKWIRENLQCLVLNSLTLSLEDPYERCFSQLSGLRVLSITNVLFYNEDLADVASLPRLESLDISNTSVTDITALVACKDILKSLTMHHLKCLKMTTTQILEVIRELKKLNHLDMSDDKQFTSDIACRLLEQNDILLHLVSLDISGRKHVTDKAVEAFIRHRPQMQFVGLLATEAGYSEFLSGEGCVKVSGEANQTQIAEALRRYSERSFFVREALFHLFSLTHVMDKANPEMLKLVVIGMRNHPTNLPVQLAASACVFNLTKQDLAAGMPVKLLADVTHLLLEAMKHFPNHQQLQKNCLLSLCSDRILQDVPFNRFDAAKLVMQWLCNHEDQNMQRMAVAIISILAAKLSTEQTAQLGAELFIVRQLLQIVRQKTSQNMVDTTLKFTLSALWNLTDESPTTCRHFIENQGLELFMKVLETFPSESSIQQKVLGLLNNIAEVKELHTELMCKDFIDQISKLLHSVEVEVSYFAAGIIAHLVSRGEETWTLSSSMRETLLEQLHSAILSWPTPECEMVAYRSFNPFFPLLACFRTPGVQLWAVWAMQHVCSKNPVRYCSMLIEEGGLVRLHRIRDHMCADPDVLRITITILDNLDRHLKKHGNPPCQKPPFTK.

LRR repeat units lie at residues 128–149 (NLQC…ERCF), 154–177 (GLRV…ASLP), 178–199 (RLES…VACK), and 209–231 (HLKC…KKLN).

This sequence belongs to the zyg-11 family.

In terms of biological role, serves as substrate adapter subunit in an E3 ubiquitin ligase complex zyg11-cul2-elongin BC. Targets substrates bearing N-terminal glycine degrons for proteasomal degradation. This chain is Protein zyg-11 homolog (zyg-11), found in Xenopus laevis (African clawed frog).